The primary structure comprises 157 residues: Ribosome maturation factor RimP (157 aa).

The protein belongs to the RimP family.

The protein resides in the cytoplasm. Functionally, required for maturation of 30S ribosomal subunits. The sequence is that of Ribosome maturation factor RimP from Thermus thermophilus (strain ATCC BAA-163 / DSM 7039 / HB27).